The chain runs to 517 residues: Perilipin-1 (517 aa).

S81 carries the post-translational modification Phosphoserine. Position 85 is a phosphothreonine (T85). A phosphoserine mark is found at S126, S130, S132, S137, and S174. The tract at residues 195 to 216 is disordered; sequence DKESAPSSGRQRTQKAPKAKPS. 3 positions are modified to phosphothreonine: T223, T298, and T300. The tract at residues 286 to 320 is disordered; it reads LAASQDESHDDQTDTEGEETDDEEEEEESEAEENV. Residues 290–321 are required for interaction with CIDEC; the sequence is QDESHDDQTDTEGEETDDEEEEEESEAEENVL. Acidic residues predominate over residues 298–318; the sequence is TDTEGEETDDEEEEEESEAEE. Residues S314, S384, S386, S410, S433, S439, S460, S492, and S494 each carry the phosphoserine modification. The tract at residues 425 to 490 is disordered; that stretch reads SAEAERKGSG…AMPREKPARR (66 aa).

This sequence belongs to the perilipin family. In terms of assembly, interacts with ABHD5. Interacts with CIDEC. Interacts with AQP7. Major cAMP-dependent protein kinase-substrate in adipocytes, also dephosphorylated by PP1. When phosphorylated, may be maximally sensitive to HSL and when unphosphorylated, may play a role in the inhibition of lipolysis, by acting as a barrier in lipid droplet.

The protein resides in the endoplasmic reticulum. It is found in the lipid droplet. Modulator of adipocyte lipid metabolism. Coats lipid storage droplets to protect them from breakdown by hormone-sensitive lipase (HSL). Its absence may result in leanness. Plays a role in unilocular lipid droplet formation by activating CIDEC. Their interaction promotes lipid droplet enlargement and directional net neutral lipid transfer. May modulate lipolysis and triglyceride levels. This Mus musculus (Mouse) protein is Perilipin-1 (Plin1).